The primary structure comprises 1047 residues: Ras GTPase-activating protein 1 (1047 aa).

Met-1 carries the post-translational modification N-acetylmethionine. The 92-residue stretch at 181–272 folds into the SH2 1 domain; sequence WYHGKLDRTI…LKGEKLLYPV (92 aa). The SH3 domain occupies 279–341; sequence EDRRRVRAIL…VEDLVEEVGR (63 aa). The 91-residue stretch at 351-441 folds into the SH2 2 domain; the sequence is WFHGKISKQE…VEGYYLKEPV (91 aa). The region spanning 474–577 is the PH domain; sequence NIVKKGYLLK…WMKGLQAFCN (104 aa). The 114-residue stretch at 577-690 folds into the C2 domain; sequence NLRKSSPGTS…QKGHATDEWF (114 aa). Tyr-615 carries the phosphotyrosine modification. One can recognise a Ras-GAP domain in the interval 764-974; the sequence is KLESLLLCTL…HRMIMFLDEL (211 aa). Ser-831 is modified (phosphoserine).

Interacts with SQSTM1. Interacts with SPSB1; the interaction does not promote degradation. Interacts with CAV2 (tyrosine phosphorylated form). Directly interacts with NCK1. Interacts with PDGFRB (tyrosine phosphorylated). Interacts (via SH2 domain) with the 'Tyr-9' phosphorylated form of PDPK1. Interacts with tyrosine-phosphorylated EPHB4. In terms of processing, the N-terminus is blocked. Phosphorylated by SRC and LCK. The phosphorylation SRC inhibits its ability to stimulate the Ras-GTPase activity, whereas phosphorylation by LCK does not display any effect on stimulation activity. In placental villi, detected only in the trophoblast layer (cytotrophoblast and syncytiotrophoblast). Not detected in stromal, endothelial or Hofbauer cells (at protein level).

The protein localises to the cytoplasm. Its function is as follows. Inhibitory regulator of the Ras-cyclic AMP pathway. Stimulates the GTPase of normal but not oncogenic Ras p21; this stimulation may be further increased in the presence of NCK1. The protein is Ras GTPase-activating protein 1 (RASA1) of Homo sapiens (Human).